A 76-amino-acid polypeptide reads, in one-letter code: DNA-directed RNA polymerase subunit epsilon (76 aa).

This sequence belongs to the RNA polymerase subunit epsilon family. RNAP is composed of a core of 2 alpha, a beta and a beta' subunit. The core is associated with a delta subunit, and at least one of epsilon or omega. When a sigma factor is associated with the core the holoenzyme is formed, which can initiate transcription.

The catalysed reaction is RNA(n) + a ribonucleoside 5'-triphosphate = RNA(n+1) + diphosphate. In terms of biological role, a non-essential component of RNA polymerase (RNAP). The polypeptide is DNA-directed RNA polymerase subunit epsilon (Streptococcus thermophilus (strain CNRZ 1066)).